Consider the following 274-residue polypeptide: NH(3)-dependent NAD(+) synthetase (274 aa).

46–53 (GISGGQDS) is a binding site for ATP. Residue D52 coordinates Mg(2+). R140 lines the deamido-NAD(+) pocket. ATP is bound at residue T160. A Mg(2+)-binding site is contributed by E165. Residues K173 and D180 each contribute to the deamido-NAD(+) site. ATP-binding residues include K189 and T211. Deamido-NAD(+) is bound at residue 260–261 (HK).

Belongs to the NAD synthetase family. Homodimer.

The catalysed reaction is deamido-NAD(+) + NH4(+) + ATP = AMP + diphosphate + NAD(+) + H(+). The protein operates within cofactor biosynthesis; NAD(+) biosynthesis; NAD(+) from deamido-NAD(+) (ammonia route): step 1/1. In terms of biological role, catalyzes the ATP-dependent amidation of deamido-NAD to form NAD. Uses ammonia as a nitrogen source. The protein is NH(3)-dependent NAD(+) synthetase of Pectobacterium atrosepticum (strain SCRI 1043 / ATCC BAA-672) (Erwinia carotovora subsp. atroseptica).